The sequence spans 267 residues: Tryptophan synthase alpha chain (267 aa).

Active-site proton acceptor residues include Glu-47 and Asp-58.

This sequence belongs to the TrpA family. As to quaternary structure, tetramer of two alpha and two beta chains.

The catalysed reaction is (1S,2R)-1-C-(indol-3-yl)glycerol 3-phosphate + L-serine = D-glyceraldehyde 3-phosphate + L-tryptophan + H2O. The protein operates within amino-acid biosynthesis; L-tryptophan biosynthesis; L-tryptophan from chorismate: step 5/5. The alpha subunit is responsible for the aldol cleavage of indoleglycerol phosphate to indole and glyceraldehyde 3-phosphate. The chain is Tryptophan synthase alpha chain from Pelodictyon phaeoclathratiforme (strain DSM 5477 / BU-1).